The sequence spans 80 residues: Toxin-like peptide AaF1CA1 (80 aa).

The first 22 residues, 1–22 (MMKLVLFSVIVILFSLIGSIHG), serve as a signal peptide directing secretion. One can recognise an LCN-type CS-alpha/beta domain in the interval 25 to 80 (VPGNYPLRPFRYRYGCAVPGDSDYCVRVCRKHGVRYGYCWFFTCWCEYLEDKNIKI). Cystine bridges form between Cys-40–Cys-63, Cys-49–Cys-68, and Cys-53–Cys-70.

It belongs to the long (3 C-C) scorpion toxin superfamily. In terms of tissue distribution, expressed by the venom gland.

The protein localises to the secreted. In terms of biological role, probable ion channel inhibitor. The chain is Toxin-like peptide AaF1CA1 from Androctonus australis (Sahara scorpion).